Consider the following 321-residue polypeptide: Probable 1-aminocyclopropane-1-carboxylate oxidase (321 aa).

The Fe2OG dioxygenase domain occupies 159 to 259; the sequence is PTFGTKVSNY…RMSIASFYNP (101 aa). Fe cation is bound by residues histidine 183, aspartate 185, and histidine 240.

This sequence belongs to the iron/ascorbate-dependent oxidoreductase family. Requires Fe cation as cofactor.

It carries out the reaction 1-aminocyclopropane-1-carboxylate + L-ascorbate + O2 = ethene + L-dehydroascorbate + hydrogen cyanide + CO2 + 2 H2O. Its pathway is alkene biosynthesis; ethylene biosynthesis via S-adenosyl-L-methionine; ethylene from S-adenosyl-L-methionine: step 2/2. The protein is Probable 1-aminocyclopropane-1-carboxylate oxidase (ACO) of Dianthus caryophyllus (Carnation).